Reading from the N-terminus, the 37-residue chain is Large ribosomal subunit protein bL36 (37 aa).

It belongs to the bacterial ribosomal protein bL36 family.

The sequence is that of Large ribosomal subunit protein bL36 from Azoarcus sp. (strain BH72).